Consider the following 482-residue polypeptide: Kynurenine 3-monooxygenase (482 aa).

This sequence belongs to the aromatic-ring hydroxylase family. KMO subfamily. FAD serves as cofactor.

The protein resides in the mitochondrion outer membrane. The catalysed reaction is L-kynurenine + NADPH + O2 + H(+) = 3-hydroxy-L-kynurenine + NADP(+) + H2O. Its pathway is cofactor biosynthesis; NAD(+) biosynthesis; quinolinate from L-kynurenine: step 1/3. Functionally, catalyzes the hydroxylation of L-kynurenine (L-Kyn) to form 3-hydroxy-L-kynurenine (L-3OHKyn). Required for synthesis of quinolinic acid. This is Kynurenine 3-monooxygenase from Phaeosphaeria nodorum (strain SN15 / ATCC MYA-4574 / FGSC 10173) (Glume blotch fungus).